We begin with the raw amino-acid sequence, 1099 residues long: Carbamoyl phosphate synthase large chain (1099 aa).

The interval 1–402 is carboxyphosphate synthetic domain; that stretch reads MPRREDIKRI…ALGKALRSLE (402 aa). The ATP site is built by arginine 129, arginine 169, glycine 175, glycine 176, glutamate 208, valine 210, glutamate 215, glycine 241, isoleucine 242, histidine 243, glutamine 285, and glutamate 299. An ATP-grasp 1 domain is found at 133–328; the sequence is KKTMEEAGLE…IAKIAALLAV (196 aa). Mg(2+)-binding residues include glutamine 285, glutamate 299, and asparagine 301. Glutamine 285, glutamate 299, and asparagine 301 together coordinate Mn(2+). Residues 403-541 are oligomerization domain; the sequence is LDAAPKLDLD…STYNGVENEA (139 aa). The carbamoyl phosphate synthetic domain stretch occupies residues 542–944; that stretch reads IPTDKEKIMI…AFAKAEIAAG (403 aa). Residues 666–857 form the ATP-grasp 2 domain; that stretch reads AKLLKRIGLR…VAKIAAKIMV (192 aa). Residues arginine 702, lysine 741, leucine 743, glutamate 748, glycine 773, valine 774, histidine 775, serine 776, glutamine 816, and glutamate 828 each coordinate ATP. Mg(2+) is bound by residues glutamine 816, glutamate 828, and asparagine 830. 3 residues coordinate Mn(2+): glutamine 816, glutamate 828, and asparagine 830. Positions 945 to 1099 constitute an MGS-like domain; sequence NPLPTEGAIL…VRKLTDTWKM (155 aa). Positions 945–1099 are allosteric domain; the sequence is NPLPTEGAIL…VRKLTDTWKM (155 aa).

Belongs to the CarB family. Composed of two chains; the small (or glutamine) chain promotes the hydrolysis of glutamine to ammonia, which is used by the large (or ammonia) chain to synthesize carbamoyl phosphate. Tetramer of heterodimers (alpha,beta)4. Requires Mg(2+) as cofactor. It depends on Mn(2+) as a cofactor.

It catalyses the reaction hydrogencarbonate + L-glutamine + 2 ATP + H2O = carbamoyl phosphate + L-glutamate + 2 ADP + phosphate + 2 H(+). It carries out the reaction hydrogencarbonate + NH4(+) + 2 ATP = carbamoyl phosphate + 2 ADP + phosphate + 2 H(+). It participates in amino-acid biosynthesis; L-arginine biosynthesis; carbamoyl phosphate from bicarbonate: step 1/1. It functions in the pathway pyrimidine metabolism; UMP biosynthesis via de novo pathway; (S)-dihydroorotate from bicarbonate: step 1/3. In terms of biological role, large subunit of the glutamine-dependent carbamoyl phosphate synthetase (CPSase). CPSase catalyzes the formation of carbamoyl phosphate from the ammonia moiety of glutamine, carbonate, and phosphate donated by ATP, constituting the first step of 2 biosynthetic pathways, one leading to arginine and/or urea and the other to pyrimidine nucleotides. The large subunit (synthetase) binds the substrates ammonia (free or transferred from glutamine from the small subunit), hydrogencarbonate and ATP and carries out an ATP-coupled ligase reaction, activating hydrogencarbonate by forming carboxy phosphate which reacts with ammonia to form carbamoyl phosphate. The chain is Carbamoyl phosphate synthase large chain from Thermotoga neapolitana (strain ATCC 49049 / DSM 4359 / NBRC 107923 / NS-E).